The chain runs to 155 residues: Cyanate hydratase (155 aa).

Catalysis depends on residues R95, E98, and S121.

Belongs to the cyanase family.

It catalyses the reaction cyanate + hydrogencarbonate + 3 H(+) = NH4(+) + 2 CO2. Catalyzes the reaction of cyanate with bicarbonate to produce ammonia and carbon dioxide. In Pseudomonas syringae pv. syringae (strain B728a), this protein is Cyanate hydratase.